Here is a 133-residue protein sequence, read N- to C-terminus: Small ribosomal subunit protein uS8c (133 aa).

The protein belongs to the universal ribosomal protein uS8 family. As to quaternary structure, part of the 30S ribosomal subunit.

Its subcellular location is the plastid. It localises to the chloroplast. Its function is as follows. One of the primary rRNA binding proteins, it binds directly to 16S rRNA central domain where it helps coordinate assembly of the platform of the 30S subunit. The polypeptide is Small ribosomal subunit protein uS8c (rps8) (Chlorokybus atmophyticus (Soil alga)).